Consider the following 624-residue polypeptide: Heat shock factor protein 5 (624 aa).

The DNA-binding element occupies 11 to 228 (NPNNFPAKLW…FHRSFRRDNL (218 aa)). 5 disordered regions span residues 52 to 77 (LSPP…SGVG), 112 to 138 (GAAG…HSPH), 186 to 214 (SASA…HGPV), 429 to 461 (CPSS…LEPL), and 572 to 605 (GPAN…DLHL). Gly residues-rich tracts occupy residues 58–77 (GAGG…SGVG) and 112–127 (GAAG…GPAG). 2 stretches are compositionally biased toward low complexity: residues 186 to 197 (SASASTSPLQHQ) and 442 to 457 (PNAN…QASQ). A Phosphoserine modification is found at serine 600.

It belongs to the HSF family. Homooligomer. As to expression, highly expressed in testis particularly in spermatocytes (at protein level). Not expressed in fetal testis and ovary.

The protein resides in the nucleus. The protein localises to the chromosome. In terms of biological role, DNA-binding transcription factor that is essential for male fertility, spermatogenesis and meiotic prophase progression in spermatocytes under non-stress conditions. Positvely and negatively regulates gene expression to ensure progression of meiotic prophase beyond pachytene stage in spermatocytes. Plays a role in male germline meiotic sex chromosome remodeling and silencing through regulation of SMARCA4. The polypeptide is Heat shock factor protein 5 (Hsf5) (Mus musculus (Mouse)).